A 256-amino-acid chain; its full sequence is Imidazole glycerol phosphate synthase subunit HisF (256 aa).

Active-site residues include Asp-11 and Asp-130.

It belongs to the HisA/HisF family. In terms of assembly, heterodimer of HisH and HisF.

The protein localises to the cytoplasm. It catalyses the reaction 5-[(5-phospho-1-deoxy-D-ribulos-1-ylimino)methylamino]-1-(5-phospho-beta-D-ribosyl)imidazole-4-carboxamide + L-glutamine = D-erythro-1-(imidazol-4-yl)glycerol 3-phosphate + 5-amino-1-(5-phospho-beta-D-ribosyl)imidazole-4-carboxamide + L-glutamate + H(+). It participates in amino-acid biosynthesis; L-histidine biosynthesis; L-histidine from 5-phospho-alpha-D-ribose 1-diphosphate: step 5/9. IGPS catalyzes the conversion of PRFAR and glutamine to IGP, AICAR and glutamate. The HisF subunit catalyzes the cyclization activity that produces IGP and AICAR from PRFAR using the ammonia provided by the HisH subunit. The protein is Imidazole glycerol phosphate synthase subunit HisF of Prochlorococcus marinus (strain MIT 9301).